A 422-amino-acid chain; its full sequence is UDP-N-acetylglucosamine 1-carboxyvinyltransferase (422 aa).

22-23 (KN) provides a ligand contact to phosphoenolpyruvate. Residue Arg-93 participates in UDP-N-acetyl-alpha-D-glucosamine binding. The active-site Proton donor is Cys-117. Cys-117 is subject to 2-(S-cysteinyl)pyruvic acid O-phosphothioketal. UDP-N-acetyl-alpha-D-glucosamine is bound by residues 122-126 (RPVDQ), Asp-305, and Ile-327.

This sequence belongs to the EPSP synthase family. MurA subfamily.

It localises to the cytoplasm. It carries out the reaction phosphoenolpyruvate + UDP-N-acetyl-alpha-D-glucosamine = UDP-N-acetyl-3-O-(1-carboxyvinyl)-alpha-D-glucosamine + phosphate. Its pathway is cell wall biogenesis; peptidoglycan biosynthesis. Its function is as follows. Cell wall formation. Adds enolpyruvyl to UDP-N-acetylglucosamine. The protein is UDP-N-acetylglucosamine 1-carboxyvinyltransferase of Bordetella bronchiseptica (strain ATCC BAA-588 / NCTC 13252 / RB50) (Alcaligenes bronchisepticus).